A 275-amino-acid chain; its full sequence is 2,3,4,5-tetrahydropyridine-2,6-dicarboxylate N-succinyltransferase (275 aa).

The substrate site is built by arginine 107 and aspartate 144.

Belongs to the transferase hexapeptide repeat family. In terms of assembly, homotrimer.

The protein localises to the cytoplasm. It carries out the reaction (S)-2,3,4,5-tetrahydrodipicolinate + succinyl-CoA + H2O = (S)-2-succinylamino-6-oxoheptanedioate + CoA. The protein operates within amino-acid biosynthesis; L-lysine biosynthesis via DAP pathway; LL-2,6-diaminopimelate from (S)-tetrahydrodipicolinate (succinylase route): step 1/3. The chain is 2,3,4,5-tetrahydropyridine-2,6-dicarboxylate N-succinyltransferase from Polynucleobacter asymbioticus (strain DSM 18221 / CIP 109841 / QLW-P1DMWA-1) (Polynucleobacter necessarius subsp. asymbioticus).